An 87-amino-acid chain; its full sequence is Pyocin-S1 immunity protein (87 aa).

This sequence belongs to the colicins ColE2/ColE8/ColE9 and pyocins S1/S2 family.

The sequence is that of Pyocin-S1 immunity protein (imm1) from Pseudomonas aeruginosa.